Here is a 244-residue protein sequence, read N- to C-terminus: Krueppel-like factor 9 (244 aa).

2 disordered regions span residues 24–51 (VPEHGGAPDAERLRLPEREVTKEHGDPG) and 79–143 (PSVC…EKRH). Over residues 32–51 (DAERLRLPEREVTKEHGDPG) the composition is skewed to basic and acidic residues. A Phosphoserine modification is found at S122. The segment covering 134–143 (KGKHASEKRH) has biased composition (basic residues). C2H2-type zinc fingers lie at residues 143-167 (HKCPYSGCGKVYGKSSHLKAHYRVH), 173-197 (FPCTWPDCLKKFSRSDELTRHYRTH), and 203-225 (FRCPLCEKRFMRSDHLTKHARRH).

This sequence belongs to the Sp1 C2H2-type zinc-finger protein family. As to quaternary structure, interacts with ZZEF1.

Its subcellular location is the nucleus. Functionally, transcription factor that binds to GC box promoter elements. Selectively activates mRNA synthesis from genes containing tandem repeats of GC boxes but represses genes with a single GC box. Acts as an epidermal circadian transcription factor regulating keratinocyte proliferation. The chain is Krueppel-like factor 9 (Klf9) from Rattus norvegicus (Rat).